The following is a 549-amino-acid chain: Fumarate hydratase 1, mitochondrial (549 aa).

A [4Fe-4S] cluster-binding site is contributed by cysteine 114. (S)-malate contacts are provided by residues 115–116 (QD), arginine 154, glycine 197, and 200–206 (NKSFLLQ). [4Fe-4S] cluster-binding residues include cysteine 233 and cysteine 328. Residues arginine 404, 450–454 (TTAGR), and lysine 474 each bind (S)-malate.

The protein belongs to the class-I fumarase family. Homodimer. [4Fe-4S] cluster serves as cofactor.

It is found in the mitochondrion. It catalyses the reaction (S)-malate = fumarate + H2O. The protein operates within carbohydrate metabolism; tricarboxylic acid cycle; (S)-malate from fumarate: step 1/1. Specifically and competitively inhibited by 2-thiomalate, which coordinates with the catalytic [4Fe-4S] cluster. In terms of biological role, catalyzes the reversible hydration of fumarate to (S)-malate. Catalyzes the hydration of fumarate to L-malate in the tricarboxylic acid (TCA) cycle to facilitate a transition step in the production of energy in the form of NADH. This is Fumarate hydratase 1, mitochondrial from Leishmania major.